We begin with the raw amino-acid sequence, 1367 residues long: Dynactin, 150 kDa isoform (1367 aa).

The CAP-Gly domain occupies 28–70 (GETAFAPGTWVGIELDEPSGKNDGSVQGERYFNCEMGYGMFVR). Positions 76 to 318 (VIAQPPPPPP…NLKATTITPR (243 aa)) are disordered. Composition is skewed to low complexity over residues 88-99 (TFRRSVTTRPTS) and 132-149 (PSRTSSTSITRSPTRSPT). Positions 150–163 (KQLATASSSGNPSR) are enriched in polar residues. 2 stretches are compositionally biased toward low complexity: residues 164–190 (SGTPSTTTKPAGPTTRTRPSLSTSRHS) and 243–259 (STGSVSSVGKSGFKRGS). 3 coiled-coil regions span residues 321 to 598 (ITNT…MQEE), 637 to 698 (LQSD…EAEQ), and 1039 to 1199 (AELK…RARL).

The protein belongs to the dynactin 150 kDa subunit family. Large macromolecular complex of at least 10 components; p150(glued) binds directly to microtubules and to cytoplasmic dynein.

It localises to the cytoplasm. The protein resides in the cytoskeleton. Its function is as follows. Required for the cytoplasmic dynein-driven retrograde movement of vesicles and organelles along microtubules. Dynein-dynactin interaction is a key component of the mechanism of axonal transport of vesicles and organelles. In Neurospora crassa (strain ATCC 24698 / 74-OR23-1A / CBS 708.71 / DSM 1257 / FGSC 987), this protein is Dynactin, 150 kDa isoform (ro-3).